Here is a 100-residue protein sequence, read N- to C-terminus: Large ribosomal subunit protein uL23 (100 aa).

This sequence belongs to the universal ribosomal protein uL23 family. As to quaternary structure, part of the 50S ribosomal subunit. Contacts protein L29, and trigger factor when it is bound to the ribosome.

Functionally, one of the early assembly proteins it binds 23S rRNA. One of the proteins that surrounds the polypeptide exit tunnel on the outside of the ribosome. Forms the main docking site for trigger factor binding to the ribosome. The chain is Large ribosomal subunit protein uL23 from Mycobacterium ulcerans (strain Agy99).